The primary structure comprises 546 residues: Chaperonin GroEL (546 aa).

ATP contacts are provided by residues 29–32, Lys50, 86–90, Gly414, 477–479, and Asp493; these read TLGP, DGTTT, and NAL. The interval 522-546 is disordered; it reads KPEKDAPNPMAGMGGGGMGGMGGMM. Positions 533–546 are enriched in gly residues; it reads GMGGGGMGGMGGMM.

The protein belongs to the chaperonin (HSP60) family. As to quaternary structure, forms a cylinder of 14 subunits composed of two heptameric rings stacked back-to-back. Interacts with the co-chaperonin GroES.

The protein localises to the cytoplasm. It carries out the reaction ATP + H2O + a folded polypeptide = ADP + phosphate + an unfolded polypeptide.. Together with its co-chaperonin GroES, plays an essential role in assisting protein folding. The GroEL-GroES system forms a nano-cage that allows encapsulation of the non-native substrate proteins and provides a physical environment optimized to promote and accelerate protein folding. The chain is Chaperonin GroEL from Leptospira borgpetersenii serovar Hardjo-bovis (strain JB197).